We begin with the raw amino-acid sequence, 1036 residues long: MAASTTTPTATTRPFFTMNPTTTEHDFRFPRRPGDSMAGTGLGGAAMSSSSANNNHNQHHPMSAFNHHHHHNAAGSARGRDSDGRPSSSNNNTSNGFVANINHQSSSNNNISKNIPPPTSDYHTQSASNGAAAYDLLRSSAFPPFQDGLAGMTQSPDEMQKQDPLATQVWKYFAKTKLALPNQERMENLTWRMMAKPLQTYRRQMETDRTHRFSESAPQKSTSGIARLRKSSEQTQSQGSDLMNLDDFINGENISTPAGLSLAPSPETSSKMADDRTAHHSTASAIPIKARKDQQSQHMIPQSVPAALHHPRMQTEFGYLPRHLRKTSIDETSKRNPNRKRPADFSPHVSAVTPSYVTNGLDADTDLHDYSLDHTSHDGLPPQTAPSSVPYALDTVGLDADTFITSAGPFQQNFSFSPSTSPMVSHDPFTAMFGPNNSSMHSGPINGNNFYSPPASAFQSTASTPHPMNEGGDNFYFGVDMRRARQQPYQPGNHGMGNAMAHQFPYAGNGNMMFPASSAGQDPTPSFAAPNSFSGHIDPTQVFHNEQAVRSPGMSVLQDSLFTFGAESDGDEEDGGAFADRNLSISHDFSSQGMEEPAFDSPSMGWDPSLPGNFSTQAARYPGGPPRKQVTIGATTTDYVDNTGEWDGSGLPRSQSQSFRQSDLRKGKMSRTASTPGLSARMNPFERLAQSASHSPPADVGRSSGLSSVPASRPSSPPPGAKQGSTTNLQGAAGNSTDTPTTCTNCFTQTTPLWRRNPDGQPLCNACGLFLKLHGVVRPLSLKTDVIKKRNRGSGASLPVGGTSTRSKKNASMSAAARKNSTLSITSNANNQPPAQVATPPAQQQVRASSVNESESPASGPASGGNTAGSTPTSYHGSTGSTSGAVGGKSVIPIASAPPKSAPGPGAGSMSRRDTISSKRQRRHSKSAGSDQPVSAGAVSSSGMDVDSPANSTGSNETMPTFNPGGAFSGLPPTTQSSLGFGNGYINTPRPMVGPGGMMGMPNGQAGQMMGASSSSGPGSGPSRTGAEWEWLTMSL.

The span at 1–17 (MAASTTTPTATTRPFFT) shows a compositional bias: low complexity. Disordered stretches follow at residues 1–126 (MAAS…HTQS), 207–240 (TDRTHRFSESAPQKSTSGIARLRKSSEQTQSQGS), 256–298 (TPAG…QSQH), 318–351 (GYLPRHLRKTSIDETSKRNPNRKRPADFSPHVSA), 590–743 (SSQG…PTTC), 792–976 (RGSG…PTTQ), and 1000–1028 (GMPNGQAGQMMGASSSSGPGSGPSRTGAE). The segment covering 23–34 (TEHDFRFPRRPG) has biased composition (basic and acidic residues). Residues 45-56 (AAMSSSSANNNH) are compositionally biased toward low complexity. A run of 3 repeats spans residues 49–55 (SSSANNN), 87–92 (SSSNNN), and 105–110 (SSSNNN). Residues 49 to 110 (SSSANNNHNQ…INHQSSSNNN (62 aa)) form a 3 X approximate repeats region. The span at 100-114 (NINHQSSSNNNISKN) shows a compositional bias: low complexity. Polar residues predominate over residues 652 to 661 (PRSQSQSFRQ). Over residues 703 to 714 (SSGLSSVPASRP) the composition is skewed to low complexity. Over residues 723 to 736 (QGSTTNLQGAAGNS) the composition is skewed to polar residues. The GATA-type zinc-finger motif lies at 743–767 (CTNCFTQTTPLWRRNPDGQPLCNAC). The segment covering 802 to 827 (GTSTRSKKNASMSAAARKNSTLSITS) has biased composition (polar residues). Composition is skewed to low complexity over residues 828 to 861 (NANNQPPAQVATPPAQQQVRASSVNESESPASGP) and 868 to 899 (AGSTPTSYHGSTGSTSGAVGGKSVIPIASAPP). A compositionally biased stretch (polar residues) spans 927–961 (SAGSDQPVSAGAVSSSGMDVDSPANSTGSNETMPT). A compositionally biased stretch (low complexity) spans 1000-1023 (GMPNGQAGQMMGASSSSGPGSGPS).

Interacts with nmr.

It is found in the nucleus. In terms of biological role, major nitrogen regulatory protein. During conditions of nitrogen limitation it turns on the expression of genes for enzymes which are required for the use of a variety of secondary nitrogen sources, including nitrates, purines, amino acids, and proteins. This is Nitrogen catabolic enzyme regulatory protein (nit-2) from Neurospora crassa (strain ATCC 24698 / 74-OR23-1A / CBS 708.71 / DSM 1257 / FGSC 987).